The chain runs to 126 residues: Protein ApaG (126 aa).

The region spanning 2 to 126 is the ApaG domain; sequence SDPRYQIDVS…FRLAVPGALH (125 aa).

The sequence is that of Protein ApaG from Pseudomonas entomophila (strain L48).